We begin with the raw amino-acid sequence, 189 residues long: Putative ankyrin repeat protein L38 (189 aa).

Residues 108-137 form an ANK repeat; that stretch reads YGKTPLITAIKSGNCIMVKKLIDYGADFNK.

The protein is Putative ankyrin repeat protein L38 of Acanthamoeba polyphaga mimivirus (APMV).